The chain runs to 325 residues: Elongation factor P--(R)-beta-lysine ligase (325 aa).

76–78 (SPE) serves as a coordination point for substrate. ATP-binding positions include 100-102 (RNE) and asparagine 109. Tyrosine 118 provides a ligand contact to substrate. Residue 244 to 245 (EL) participates in ATP binding. Glutamate 251 is a substrate binding site. Glycine 300 contributes to the ATP binding site.

Belongs to the class-II aminoacyl-tRNA synthetase family. EpmA subfamily. In terms of assembly, homodimer.

It catalyses the reaction D-beta-lysine + L-lysyl-[protein] + ATP = N(6)-((3R)-3,6-diaminohexanoyl)-L-lysyl-[protein] + AMP + diphosphate + H(+). Its function is as follows. With EpmB is involved in the beta-lysylation step of the post-translational modification of translation elongation factor P (EF-P) on 'Lys-34'. Catalyzes the ATP-dependent activation of (R)-beta-lysine produced by EpmB, forming a lysyl-adenylate, from which the beta-lysyl moiety is then transferred to the epsilon-amino group of EF-P 'Lys-34'. In Salmonella choleraesuis (strain SC-B67), this protein is Elongation factor P--(R)-beta-lysine ligase.